A 599-amino-acid polypeptide reads, in one-letter code: DNA mismatch repair protein MutL (599 aa).

The protein belongs to the DNA mismatch repair MutL/HexB family.

Functionally, this protein is involved in the repair of mismatches in DNA. It is required for dam-dependent methyl-directed DNA mismatch repair. May act as a 'molecular matchmaker', a protein that promotes the formation of a stable complex between two or more DNA-binding proteins in an ATP-dependent manner without itself being part of a final effector complex. This chain is DNA mismatch repair protein MutL, found in Rhodopseudomonas palustris (strain BisB18).